A 137-amino-acid polypeptide reads, in one-letter code: Large-conductance mechanosensitive channel (137 aa).

2 helical membrane passes run 10-30 and 76-96; these read FAMRGNVVDLAVGVIIGAAFG and GVFIQNVFDFVIVAFAIFVAI.

This sequence belongs to the MscL family. In terms of assembly, homopentamer.

It localises to the cell inner membrane. In terms of biological role, channel that opens in response to stretch forces in the membrane lipid bilayer. May participate in the regulation of osmotic pressure changes within the cell. The polypeptide is Large-conductance mechanosensitive channel (Salmonella typhimurium (strain LT2 / SGSC1412 / ATCC 700720)).